Reading from the N-terminus, the 382-residue chain is RNA binding protein fox-1 homolog 1-like (382 aa).

2 disordered regions span residues 34–79 (QEAG…AAHP) and 94–148 (GPQH…QPKR). Over residues 49–65 (YAPPPSYPPPGQAPPTP) the composition is skewed to pro residues. Polar residues predominate over residues 101–110 (ESITASNTDD). The RRM domain occupies 147–223 (KRLHVSNIPF…RKIEVNNATA (77 aa)).

As to expression, expressed during muscle development in adaxial cells, somites, cardiac precursors, finbuds and jaw muscle cells.

The protein resides in the nucleus. Its function is as follows. RNA-binding protein that regulates alternative splicing events by binding to 5'-GCAUG-3' elements. Regulates alternative splicing of tissue-specific exons. The chain is RNA binding protein fox-1 homolog 1-like (rbfox1l) from Danio rerio (Zebrafish).